The sequence spans 69 residues: UPF0337 protein DIP1660 (69 aa).

2 stretches are compositionally biased toward basic and acidic residues: residues 1–19 and 30–41; these read MSDFENKIEELGGKAKEAV and DEGRADQTKADV. Residues 1-42 are disordered; the sequence is MSDFENKIEELGGKAKEAVGEATENEQLADEGRADQTKADVK.

It belongs to the UPF0337 (CsbD) family.

The protein is UPF0337 protein DIP1660 of Corynebacterium diphtheriae (strain ATCC 700971 / NCTC 13129 / Biotype gravis).